Here is a 301-residue protein sequence, read N- to C-terminus: Elongation factor Ts (301 aa).

The segment at 82 to 85 (TDFV) is involved in Mg(2+) ion dislocation from EF-Tu.

This sequence belongs to the EF-Ts family.

It localises to the cytoplasm. Its function is as follows. Associates with the EF-Tu.GDP complex and induces the exchange of GDP to GTP. It remains bound to the aminoacyl-tRNA.EF-Tu.GTP complex up to the GTP hydrolysis stage on the ribosome. In Hyphomonas neptunium (strain ATCC 15444), this protein is Elongation factor Ts.